The following is a 36-amino-acid chain: Beta/delta/mu-theraphotoxin-Pv1 (36 aa).

3 cysteine pairs are disulfide-bonded: cysteine 3–cysteine 17, cysteine 10–cysteine 22, and cysteine 16–cysteine 30. Phenylalanine 36 is subject to Phenylalanine amide.

The protein belongs to the neurotoxin 10 (Hwtx-1) family. Expressed by the venom gland.

The protein resides in the secreted. In terms of biological role, gating-modifier toxin that targets voltage-gated sodium channels. Inhibits the inactivation of Nav1.7/SCN9A. This Poecilotheria vittata (Ghost ornamental tarantula) protein is Beta/delta/mu-theraphotoxin-Pv1.